The chain runs to 162 residues: Shikimate kinase (162 aa).

10 to 15 is an ATP binding site; the sequence is GAGKST. Residue S14 participates in Mg(2+) binding. The substrate site is built by D28, R52, and G73. R113 is a binding site for ATP. R129 provides a ligand contact to substrate.

Belongs to the shikimate kinase family. Monomer. The cofactor is Mg(2+).

Its subcellular location is the cytoplasm. The catalysed reaction is shikimate + ATP = 3-phosphoshikimate + ADP + H(+). The protein operates within metabolic intermediate biosynthesis; chorismate biosynthesis; chorismate from D-erythrose 4-phosphate and phosphoenolpyruvate: step 5/7. Functionally, catalyzes the specific phosphorylation of the 3-hydroxyl group of shikimic acid using ATP as a cosubstrate. This Lactococcus lactis subsp. lactis (strain IL1403) (Streptococcus lactis) protein is Shikimate kinase.